The sequence spans 393 residues: MNMSAWALPEYIEDILPAEALKIEMMRRRVLDWLFVNGYELVGPPLLEYVESLLTGSGGQMNLRVLKVVDQLSGRMMGLRADMTPQVARIDAHLLNRKGITRLCYAGSVLHARPSGLTRTREPLQIGAELYGHQGLESDLEIQRLMLQSLAIAGVGNIHLDLGHVAVFRGLIRSTGISPDLEMELSGALQGKDKAALKELCAGLKKQVDASVREALQLLPELYGDENVLTLARSALPSYPGIMKALDELEMVASELSPLVDTLAFDLADLRGYHYHSGMVFAAYTDNCPNAIAVGGRYDEVGKAFGRARPATGFSMDLRELSGLMSSDSHPRGILAPFIKEDKALEKKIEQLRNEGQIVIVALPGHENDAGSFNCDKKLVSENGVWSIADALI.

This sequence belongs to the class-II aminoacyl-tRNA synthetase family. HisZ subfamily. As to quaternary structure, heteromultimer composed of HisG and HisZ subunits.

It localises to the cytoplasm. It participates in amino-acid biosynthesis; L-histidine biosynthesis; L-histidine from 5-phospho-alpha-D-ribose 1-diphosphate: step 1/9. In terms of biological role, required for the first step of histidine biosynthesis. May allow the feedback regulation of ATP phosphoribosyltransferase activity by histidine. This is ATP phosphoribosyltransferase regulatory subunit from Nitrosospira multiformis (strain ATCC 25196 / NCIMB 11849 / C 71).